The chain runs to 612 residues: Dihydroxy-acid dehydratase (612 aa).

Residue D81 participates in Mg(2+) binding. Residue C122 coordinates [2Fe-2S] cluster. 2 residues coordinate Mg(2+): D123 and K124. An N6-carboxylysine modification is found at K124. A [2Fe-2S] cluster-binding site is contributed by C193. E489 serves as a coordination point for Mg(2+). The Proton acceptor role is filled by S515.

Belongs to the IlvD/Edd family. In terms of assembly, homodimer. [2Fe-2S] cluster is required as a cofactor. Requires Mg(2+) as cofactor.

The catalysed reaction is (2R)-2,3-dihydroxy-3-methylbutanoate = 3-methyl-2-oxobutanoate + H2O. It carries out the reaction (2R,3R)-2,3-dihydroxy-3-methylpentanoate = (S)-3-methyl-2-oxopentanoate + H2O. It functions in the pathway amino-acid biosynthesis; L-isoleucine biosynthesis; L-isoleucine from 2-oxobutanoate: step 3/4. Its pathway is amino-acid biosynthesis; L-valine biosynthesis; L-valine from pyruvate: step 3/4. Its function is as follows. Functions in the biosynthesis of branched-chain amino acids. Catalyzes the dehydration of (2R,3R)-2,3-dihydroxy-3-methylpentanoate (2,3-dihydroxy-3-methylvalerate) into 2-oxo-3-methylpentanoate (2-oxo-3-methylvalerate) and of (2R)-2,3-dihydroxy-3-methylbutanoate (2,3-dihydroxyisovalerate) into 2-oxo-3-methylbutanoate (2-oxoisovalerate), the penultimate precursor to L-isoleucine and L-valine, respectively. This Xanthomonas oryzae pv. oryzae (strain MAFF 311018) protein is Dihydroxy-acid dehydratase.